Reading from the N-terminus, the 113-residue chain is uncharacterized protein (113 aa).

Residues 78 to 113 (YCNRGSERTNQGNRGSAPSKILLPRTIADPFRGGPE) are disordered.

This is an uncharacterized protein from Halobacterium phage phiH (Bacteriophage phi-H).